Reading from the N-terminus, the 95-residue chain is Pyrimidine/purine nucleoside phosphorylase (95 aa).

The protein belongs to the nucleoside phosphorylase PpnP family.

The catalysed reaction is a purine D-ribonucleoside + phosphate = a purine nucleobase + alpha-D-ribose 1-phosphate. It carries out the reaction adenosine + phosphate = alpha-D-ribose 1-phosphate + adenine. It catalyses the reaction cytidine + phosphate = cytosine + alpha-D-ribose 1-phosphate. The enzyme catalyses guanosine + phosphate = alpha-D-ribose 1-phosphate + guanine. The catalysed reaction is inosine + phosphate = alpha-D-ribose 1-phosphate + hypoxanthine. It carries out the reaction thymidine + phosphate = 2-deoxy-alpha-D-ribose 1-phosphate + thymine. It catalyses the reaction uridine + phosphate = alpha-D-ribose 1-phosphate + uracil. The enzyme catalyses xanthosine + phosphate = alpha-D-ribose 1-phosphate + xanthine. Functionally, catalyzes the phosphorolysis of diverse nucleosides, yielding D-ribose 1-phosphate and the respective free bases. Can use uridine, adenosine, guanosine, cytidine, thymidine, inosine and xanthosine as substrates. Also catalyzes the reverse reactions. The polypeptide is Pyrimidine/purine nucleoside phosphorylase (Edwardsiella ictaluri (strain 93-146)).